We begin with the raw amino-acid sequence, 59 residues long: Large ribosomal subunit protein bL32 (59 aa).

Residues 1-16 (MAVPKRKTSPSKRGMR) show a composition bias toward basic residues. The disordered stretch occupies residues 1 to 41 (MAVPKRKTSPSKRGMRRSADALKAPTYIEDKNSGELRRPHH). Basic and acidic residues predominate over residues 28-41 (IEDKNSGELRRPHH).

Belongs to the bacterial ribosomal protein bL32 family.

The sequence is that of Large ribosomal subunit protein bL32 from Bartonella henselae (strain ATCC 49882 / DSM 28221 / CCUG 30454 / Houston 1) (Rochalimaea henselae).